We begin with the raw amino-acid sequence, 177 residues long: B-phycoerythrin beta chain (177 aa).

(2R,3E)-phycoerythrobilin is bound by residues cysteine 50 and cysteine 61. Asparagine 72 bears the N4-methylasparagine mark. Positions 82 and 158 each coordinate (2R,3E)-phycoerythrobilin.

This sequence belongs to the phycobiliprotein family. Heterotetramer of one alpha-1, one alpha-2, and two beta chains. In terms of processing, contains three covalently linked bilin chromophores.

The protein localises to the plastid. It is found in the chloroplast thylakoid membrane. In terms of biological role, light-harvesting photosynthetic bile pigment-protein from the phycobiliprotein complex. This chain is B-phycoerythrin beta chain (cpeB), found in Guillardia theta (Cryptophyte).